Consider the following 465-residue polypeptide: UDP-N-acetylmuramoylalanine--D-glutamate ligase (465 aa).

G116–T122 contacts ATP.

Belongs to the MurCDEF family.

It is found in the cytoplasm. It catalyses the reaction UDP-N-acetyl-alpha-D-muramoyl-L-alanine + D-glutamate + ATP = UDP-N-acetyl-alpha-D-muramoyl-L-alanyl-D-glutamate + ADP + phosphate + H(+). It participates in cell wall biogenesis; peptidoglycan biosynthesis. Functionally, cell wall formation. Catalyzes the addition of glutamate to the nucleotide precursor UDP-N-acetylmuramoyl-L-alanine (UMA). In Thermobifida fusca (strain YX), this protein is UDP-N-acetylmuramoylalanine--D-glutamate ligase.